Consider the following 562-residue polypeptide: NAD-dependent malic enzyme (562 aa).

Tyrosine 101 acts as the Proton donor in catalysis. Arginine 154 is an NAD(+) binding site. Lysine 172 acts as the Proton acceptor in catalysis. Residues glutamate 243, aspartate 244, and aspartate 267 each contribute to the a divalent metal cation site. Residues aspartate 267 and asparagine 415 each coordinate NAD(+).

Belongs to the malic enzymes family. In terms of assembly, homotetramer. Requires Mg(2+) as cofactor. It depends on Mn(2+) as a cofactor.

It catalyses the reaction (S)-malate + NAD(+) = pyruvate + CO2 + NADH. The catalysed reaction is oxaloacetate + H(+) = pyruvate + CO2. This is NAD-dependent malic enzyme from Shewanella halifaxensis (strain HAW-EB4).